The primary structure comprises 465 residues: Argininosuccinate lyase (465 aa).

This sequence belongs to the lyase 1 family. Argininosuccinate lyase subfamily.

It is found in the cytoplasm. The catalysed reaction is 2-(N(omega)-L-arginino)succinate = fumarate + L-arginine. It participates in amino-acid biosynthesis; L-arginine biosynthesis; L-arginine from L-ornithine and carbamoyl phosphate: step 3/3. The polypeptide is Argininosuccinate lyase (Rhodopseudomonas palustris (strain BisB18)).